The following is a 450-amino-acid chain: Chromosomal replication initiator protein DnaA (450 aa).

The segment at 1-84 (MTENEQIFWN…AVDYVYEDNL (84 aa)) is domain I, interacts with DnaA modulators. Residues 84–109 (LMIEQQHQGQQGYTEQAFQQLPAVQS) form a domain II region. Residues 110 to 328 (DLNPKYSFDN…GALKDISLVA (219 aa)) form a domain III, AAA+ region region. ATP is bound by residues glycine 154, glycine 156, lysine 157, and threonine 158. The interval 329–450 (NFKQIDTITV…EIETIKNKIK (122 aa)) is domain IV, binds dsDNA.

Belongs to the DnaA family. As to quaternary structure, oligomerizes as a right-handed, spiral filament on DNA at oriC.

The protein localises to the cytoplasm. In terms of biological role, plays an essential role in the initiation and regulation of chromosomal replication. ATP-DnaA binds to the origin of replication (oriC) to initiate formation of the DNA replication initiation complex once per cell cycle. Binds the DnaA box (a 9 base pair repeat at the origin) and separates the double-stranded (ds)DNA. Forms a right-handed helical filament on oriC DNA; dsDNA binds to the exterior of the filament while single-stranded (ss)DNA is stabiized in the filament's interior. The ATP-DnaA-oriC complex binds and stabilizes one strand of the AT-rich DNA unwinding element (DUE), permitting loading of DNA polymerase. After initiation quickly degrades to an ADP-DnaA complex that is not apt for DNA replication. Binds acidic phospholipids. The polypeptide is Chromosomal replication initiator protein DnaA (Streptococcus equi subsp. zooepidemicus (strain H70)).